We begin with the raw amino-acid sequence, 98 residues long: NADH-ubiquinone oxidoreductase chain 4L (98 aa).

Helical transmembrane passes span 1 to 21 (MSLT…GLLL), 29 to 49 (SLLC…MIIL), and 61 to 81 (IILL…LVMV).

It belongs to the complex I subunit 4L family. In terms of assembly, core subunit of respiratory chain NADH dehydrogenase (Complex I) which is composed of 45 different subunits.

It localises to the mitochondrion inner membrane. The catalysed reaction is a ubiquinone + NADH + 5 H(+)(in) = a ubiquinol + NAD(+) + 4 H(+)(out). Its function is as follows. Core subunit of the mitochondrial membrane respiratory chain NADH dehydrogenase (Complex I) which catalyzes electron transfer from NADH through the respiratory chain, using ubiquinone as an electron acceptor. Part of the enzyme membrane arm which is embedded in the lipid bilayer and involved in proton translocation. This is NADH-ubiquinone oxidoreductase chain 4L (MT-ND4L) from Platyrrhinus brachycephalus (Short-headed broad-nosed bat).